Reading from the N-terminus, the 376-residue chain is Alpha-2,8-sialyltransferase 8E (376 aa).

Residues 17–37 (TLLFIFICAFALVTLLQQILY) traverse the membrane as a helical segment. N-linked (GlcNAc...) asparagine glycosylation occurs at Asn56. Disulfide bonds link Cys164–Cys313 and Cys178–Cys373. Substrate is bound by residues Asn192 and 214 to 216 (NPS). A glycan (N-linked (GlcNAc...) asparagine) is linked at Asn241. 300–302 (STG) contributes to the substrate binding site. His348 serves as the catalytic Proton donor/acceptor.

This sequence belongs to the glycosyltransferase 29 family. Expressed in liver.

The protein resides in the golgi apparatus membrane. It catalyses the reaction a ganglioside GT1b (d18:1(4E)) + CMP-N-acetyl-beta-neuraminate = a ganglioside GQ1b (d18:1(4E)) + CMP + H(+). The catalysed reaction is a ganglioside GQ1c (d18:1(4E)) + CMP-N-acetyl-beta-neuraminate = a ganglioside GP1c (d18:1(4E)) + CMP + H(+). It carries out the reaction a ganglioside GD3 (d18:1(4E)) + CMP-N-acetyl-beta-neuraminate = a ganglioside GT3 (d18:1(4E)) + CMP + H(+). The enzyme catalyses a ganglioside GD1a (d18:1(4E)) + CMP-N-acetyl-beta-neuraminate = a ganglioside GT1a (d18:1(4E)) + CMP + H(+). It catalyses the reaction a ganglioside GM1b (d18:1(4E)) + CMP-N-acetyl-beta-neuraminate = a ganglioside GD1c (d18:1(4E)) + CMP + H(+). The protein operates within protein modification; protein glycosylation. Involved in the synthesis of gangliosides GD1c, GT1a, GQ1b, GP1c and GT3 from GD1a, GT1b, GM1b and GD3 respectively. This is Alpha-2,8-sialyltransferase 8E from Rattus norvegicus (Rat).